We begin with the raw amino-acid sequence, 365 residues long: MINLGAKQSTIVVAMSGGVDSSAVAAMLNEQGHNVIGITLQLYDHGMAVGKKNACCAGQDIYDAKMVANKLGIPHYVLDYESKFKESVIDNFVDSYLQGETPLPCVQCNKSVKFRDLIKTARELGADKLATGHYVRKINGDNGAELHTGLDPAKDQSYFLFTTTKEQLEYLRFPLGGLTKGETRKLASKFGLEVADKPDSQDICFIPDGNYKSVINKIRPNSSESGKIIHVNGFELGEHSGIINYTIGQRRGLGIAYNEPLYVVKIDPKDNIVYVGPESALNVQEFIIRDVNWLADEIKDNEKLEVAVKIRSTRPPRLAEISKLGDDKMKVKFLCKEKAVAPGQACVIYAGARVLGGGWITREIR.

Residues 14–21 (AMSGGVDS) and L40 each bind ATP. C108 functions as the Nucleophile in the catalytic mechanism. An intrachain disulfide couples C108 to C204. G132 is a binding site for ATP. The interaction with tRNA stretch occupies residues 154–156 (KDQ). C204 functions as the Cysteine persulfide intermediate in the catalytic mechanism.

The protein belongs to the MnmA/TRMU family.

The protein resides in the cytoplasm. The enzyme catalyses S-sulfanyl-L-cysteinyl-[protein] + uridine(34) in tRNA + AH2 + ATP = 2-thiouridine(34) in tRNA + L-cysteinyl-[protein] + A + AMP + diphosphate + H(+). Catalyzes the 2-thiolation of uridine at the wobble position (U34) of tRNA, leading to the formation of s(2)U34. The polypeptide is tRNA-specific 2-thiouridylase MnmA (Rickettsia rickettsii (strain Iowa)).